Reading from the N-terminus, the 573-residue chain is Chromosomal replication initiator protein DnaA (573 aa).

A domain I, interacts with DnaA modulators region spans residues 1–85; sequence MSQNSSSLLE…TKVLSMRMGR (85 aa). The segment at 85-231 is domain II; it reads RSFSLAVSVE…TPAHNPNREV (147 aa). Positions 91-232 are disordered; that stretch reads VSVEPSRDGE…PAHNPNREVS (142 aa). Positions 116 to 169 are enriched in low complexity; sequence PYPGQGPQSPQGQQGQQGQHPVQQEVRAHAPAPHQQGQHQAAQHQPPANQAPGQ. Positions 178–191 are enriched in polar residues; the sequence is QASQSAGAWEQTHS. Over residues 202–213 the composition is skewed to pro residues; the sequence is SPAPVEPPPQPA. A domain III, AAA+ region region spans residues 232-448; the sequence is SLNPKYTFEN…GALIRVSAYS (217 aa). ATP contacts are provided by glycine 276, glycine 278, lysine 279, and threonine 280. The segment at 449 to 573 is domain IV, binds dsDNA; it reads SLINQPIDKE…TQLIKSRGRN (125 aa).

It belongs to the DnaA family. As to quaternary structure, oligomerizes as a right-handed, spiral filament on DNA at oriC.

The protein localises to the cytoplasm. Its function is as follows. Plays an essential role in the initiation and regulation of chromosomal replication. ATP-DnaA binds to the origin of replication (oriC) to initiate formation of the DNA replication initiation complex once per cell cycle. Binds the DnaA box (a 9 base pair repeat at the origin) and separates the double-stranded (ds)DNA. Forms a right-handed helical filament on oriC DNA; dsDNA binds to the exterior of the filament while single-stranded (ss)DNA is stabiized in the filament's interior. The ATP-DnaA-oriC complex binds and stabilizes one strand of the AT-rich DNA unwinding element (DUE), permitting loading of DNA polymerase. After initiation quickly degrades to an ADP-DnaA complex that is not apt for DNA replication. Binds acidic phospholipids. In Corynebacterium efficiens (strain DSM 44549 / YS-314 / AJ 12310 / JCM 11189 / NBRC 100395), this protein is Chromosomal replication initiator protein DnaA.